We begin with the raw amino-acid sequence, 145 residues long: Probable D-aminoacyl-tRNA deacylase (145 aa).

Belongs to the DTD family. Homodimer.

The protein localises to the cytoplasm. It catalyses the reaction glycyl-tRNA(Ala) + H2O = tRNA(Ala) + glycine + H(+). The catalysed reaction is a D-aminoacyl-tRNA + H2O = a tRNA + a D-alpha-amino acid + H(+). In terms of biological role, an aminoacyl-tRNA editing enzyme that deacylates mischarged D-aminoacyl-tRNAs. Also deacylates mischarged glycyl-tRNA(Ala), protecting cells against glycine mischarging by AlaRS. Acts via tRNA-based rather than protein-based catalysis; rejects L-amino acids rather than detecting D-amino acids in the active site. By recycling D-aminoacyl-tRNA to D-amino acids and free tRNA molecules, this enzyme counteracts the toxicity associated with the formation of D-aminoacyl-tRNA entities in vivo and helps enforce protein L-homochirality. The sequence is that of Probable D-aminoacyl-tRNA deacylase from Shigella flexneri serotype 5b (strain 8401).